A 249-amino-acid chain; its full sequence is AA9 family lytic polysaccharide monooxygenase A (249 aa).

The first 21 residues, 1 to 21 (MALSKIAALSTILASASLVAG), serve as a signal peptide directing secretion. Residue histidine 22 coordinates Cu(2+). The residue at position 22 (histidine 22) is a Methylhistidine. N-linked (GlcNAc...) asparagine glycans are attached at residues asparagine 34 and asparagine 80. Disulfide bonds link cysteine 77/cysteine 199 and cysteine 118/cysteine 122. Residue histidine 107 participates in Cu(2+) binding. O2 contacts are provided by histidine 185 and glutamine 194. Position 196 (tyrosine 196) interacts with Cu(2+).

The protein belongs to the polysaccharide monooxygenase AA9 family. Cu(2+) is required as a cofactor. In terms of processing, the catalytically essential N-terminal histidine His-22 is post-translationally modified by methylation to prevent protonation of the histidine side chain, and protect the critical active site of the enzyme from oxidative damage.

It localises to the secreted. The enzyme catalyses [(1-&gt;4)-beta-D-glucosyl]n+m + reduced acceptor + O2 = 4-dehydro-beta-D-glucosyl-[(1-&gt;4)-beta-D-glucosyl]n-1 + [(1-&gt;4)-beta-D-glucosyl]m + acceptor + H2O.. Its function is as follows. Lytic polysaccharide monooxygenase (LPMO) that exhibits a mixed C1/C4 oxidative cleavage activity on cellulose and xyloglucan. Catalysis by LPMOs requires the reduction of the active-site copper from Cu(II) to Cu(I) by a reducing agent and H(2)O(2) or O(2) as a cosubstrate. Shows a higher boosting effect with cellulases on the enzymatic saccharification of complex lignocellulosic substrates associated with xyloglucan than on the lignocellulosic substrates without xyloglucan. The oxidative cleavage of xyloglucan by LPMO9A may facilitate to open up the sterical hindrance of cellulose by xyloglucan and thereby increase accessibility for cellulase to lignocellulosic substrates. This chain is AA9 family lytic polysaccharide monooxygenase A, found in Penicillium parvum (Eupenicillium parvum).